The sequence spans 125 residues: uncharacterized protein (125 aa).

Its subcellular location is the mitochondrion. This is an uncharacterized protein from Paramecium tetraurelia.